We begin with the raw amino-acid sequence, 20 residues long: Fibrinogen (20 aa).

The 20-residue stretch at 1 to 20 (LHSNLEYQYRYSGRVASGIP) folds into the Vitellogenin domain.

In terms of tissue distribution, secreted into the hemolymph.

The protein localises to the secreted. Its subcellular location is the extracellular space. Involved in lipid transport. Plays a role in hemolymph clotting. May be involved in wound healing in the cuticle. The chain is Fibrinogen from Pacifastacus leniusculus (Signal crayfish).